A 246-amino-acid chain; its full sequence is AA9 family lytic polysaccharide monooxygenase D (246 aa).

An N-terminal signal peptide occupies residues methionine 1 to serine 19. Histidine 20 contacts Cu(2+). Cysteines 78 and 196 form a disulfide. Residues asparagine 86, asparagine 141, and asparagine 156 are each glycosylated (N-linked (GlcNAc...) asparagine). The O2 site is built by histidine 182 and glutamine 191. Cu(2+) is bound at residue tyrosine 193. Asparagine 235 carries N-linked (GlcNAc...) asparagine glycosylation.

Belongs to the polysaccharide monooxygenase AA9 family. The cofactor is Cu(2+).

The protein localises to the secreted. It catalyses the reaction [(1-&gt;4)-beta-D-glucosyl]n+m + reduced acceptor + O2 = 4-dehydro-beta-D-glucosyl-[(1-&gt;4)-beta-D-glucosyl]n-1 + [(1-&gt;4)-beta-D-glucosyl]m + acceptor + H2O.. Functionally, lytic polysaccharide monooxygenase (LPMO) that depolymerizes crystalline and amorphous polysaccharides via the oxidation of scissile alpha- or beta-(1-4)-glycosidic bonds, yielding C1 and C4 oxidation products. Catalysis by LPMOs requires the reduction of the active-site copper from Cu(II) to Cu(I) by a reducing agent and H(2)O(2) or O(2) as a cosubstrate. This is AA9 family lytic polysaccharide monooxygenase D from Botryotinia fuckeliana (strain B05.10) (Noble rot fungus).